The chain runs to 86 residues: Toxin Tpa5 (86 aa).

Positions 1-20 (MSIFPIALALLLIGLEEGEA) are cleaved as a signal peptide. Residues 22–85 (RDGYPISKNN…WGDPGTPPCM (64 aa)) form the LCN-type CS-alpha/beta domain. 4 disulfide bridges follow: Cys-33/Cys-84, Cys-37/Cys-58, Cys-43/Cys-64, and Cys-47/Cys-66.

This sequence belongs to the long (4 C-C) scorpion toxin superfamily. Sodium channel inhibitor family. Beta subfamily. As to expression, expressed by the venom gland.

The protein localises to the secreted. Functionally, beta toxins bind voltage-independently at site-4 of sodium channels (Nav) and shift the voltage of activation toward more negative potentials thereby affecting sodium channel activation and promoting spontaneous and repetitive firing. This Tityus pachyurus (Colombian scorpion) protein is Toxin Tpa5.